A 182-amino-acid chain; its full sequence is Pyruvate synthase subunit PorC (182 aa).

As to quaternary structure, heterotetramer of one alpha, one beta, one delta and one gamma chain.

The enzyme catalyses 2 oxidized [2Fe-2S]-[ferredoxin] + pyruvate + CoA = 2 reduced [2Fe-2S]-[ferredoxin] + acetyl-CoA + CO2 + H(+). The protein is Pyruvate synthase subunit PorC (porC) of Methanosarcina barkeri (strain Fusaro / DSM 804).